Consider the following 149-residue polypeptide: Calmodulin (149 aa).

Ala-2 bears the N-acetylalanine mark. EF-hand domains follow at residues 8-43 (EQIA…LGQN), 44-79 (PTEA…KMKD), 81-116 (DSEE…LGEK), and 117-149 (LTDE…MMAK). 14 residues coordinate Ca(2+): Asp-21, Asp-23, Asp-25, Cys-27, Glu-32, Asp-57, Asp-59, Asn-61, Thr-63, Glu-68, Asp-94, Asp-96, Asn-98, and Glu-105. Residue Lys-116 is modified to N6,N6,N6-trimethyllysine. Asp-130, Asp-132, Asp-134, Gln-136, and Glu-141 together coordinate Ca(2+).

The protein belongs to the calmodulin family.

Calmodulin mediates the control of a large number of enzymes, ion channels and other proteins by Ca(2+). Among the enzymes to be stimulated by the calmodulin-Ca(2+) complex are a number of protein kinases and phosphatases. The protein is Calmodulin (CALM1) of Zea mays (Maize).